Here is a 359-residue protein sequence, read N- to C-terminus: Heme A synthase (359 aa).

A run of 5 helical transmembrane segments spans residues 8-28, 94-114, 124-144, 159-179, and 215-235; these read IMSIWLIVSTLLLLLMIVVGG, LLGRITGIIIIIPFLIFCYLK, LLLITCLVVIQGFMGWYMVKS, GHLLLAVIIYHQLIAELLIII, and IIIFLLYTQIMFGALVAGLDA. His274 lines the heme pocket. The next 3 helical transmembrane spans lie at 276 to 296, 303 to 323, and 328 to 348; these read WFGILISGLIICYAIWLIILN, MGMVAACLVLVQVTTGIITLL, and ILAALTHQVGAILILTTFLFI. A heme-binding site is contributed by His334.

Belongs to the COX15/CtaA family. Type 2 subfamily. In terms of assembly, interacts with CtaB. Requires heme b as cofactor.

The protein resides in the cell membrane. The catalysed reaction is Fe(II)-heme o + 2 A + H2O = Fe(II)-heme a + 2 AH2. The protein operates within porphyrin-containing compound metabolism; heme A biosynthesis; heme A from heme O: step 1/1. Its function is as follows. Catalyzes the conversion of heme O to heme A by two successive hydroxylations of the methyl group at C8. The first hydroxylation forms heme I, the second hydroxylation results in an unstable dihydroxymethyl group, which spontaneously dehydrates, resulting in the formyl group of heme A. This Orientia tsutsugamushi (strain Boryong) (Rickettsia tsutsugamushi) protein is Heme A synthase.